A 287-amino-acid chain; its full sequence is ATP synthase gamma chain (287 aa).

The protein belongs to the ATPase gamma chain family. As to quaternary structure, F-type ATPases have 2 components, CF(1) - the catalytic core - and CF(0) - the membrane proton channel. CF(1) has five subunits: alpha(3), beta(3), gamma(1), delta(1), epsilon(1). CF(0) has three main subunits: a, b and c. The F(1)F(0) complex interacts with SpoIIIJ and YqjG; YqgA is found in the same complex. Interacts with FloT.

The protein resides in the cell membrane. The protein localises to the membrane raft. Produces ATP from ADP in the presence of a proton gradient across the membrane. The gamma chain is believed to be important in regulating ATPase activity and the flow of protons through the CF(0) complex. This chain is ATP synthase gamma chain, found in Bacillus subtilis (strain 168).